Here is a 1186-residue protein sequence, read N- to C-terminus: Chromosome partition protein Smc (1186 aa).

Residue 32–39 coordinates ATP; the sequence is PNGSGKSN. Coiled-coil stretches lie at residues 167-206 and 259-481; these read VLKY…EPLK and SSAI…QAYQ. An SMC hinge domain is found at 519 to 637; sequence GIRGAVLELI…EDLKGANELA (119 aa). 3 coiled-coil regions span residues 672–864, 893–943, and 990–1029; these read LLGR…MSSS, RDQR…NLLQ, and SIDE…DEEM.

The protein belongs to the SMC family. Homodimer.

It localises to the cytoplasm. Functionally, required for chromosome condensation and partitioning. The sequence is that of Chromosome partition protein Smc from Bacillus subtilis (strain 168).